The chain runs to 442 residues: C4-dicarboxylate transport protein (442 aa).

The next 8 helical transmembrane spans lie at 19 to 39, 55 to 75, 90 to 110, 161 to 181, 199 to 219, 232 to 252, 318 to 338, and 366 to 386; these read QLYF…HFEP, LVKM…IAGM, AYFL…AHVV, ILQV…VGDA, LVGI…AFTI, WLVG…LGFV, IYMT…LTLG, and AATL…ILGV.

This sequence belongs to the dicarboxylate/amino acid:cation symporter (DAACS) (TC 2.A.23) family.

The protein localises to the cell inner membrane. Functionally, responsible for the transport of dicarboxylates such as succinate, fumarate, and malate from the periplasm across the membrane. The protein is C4-dicarboxylate transport protein of Delftia acidovorans (strain DSM 14801 / SPH-1).